The primary structure comprises 167 residues: Peptidoglycan L-alanyl-D-glutamate endopeptidase CwlK (167 aa).

The signal sequence occupies residues 1–26 (MNLPAKTFVILCILFLLDLCFSYIRH).

It belongs to the peptidase M15C family.

It is found in the cell membrane. Functionally, cleaves the linkage of the L-alanine-D-glutamic acid of B.subtilis cell wall. This chain is Peptidoglycan L-alanyl-D-glutamate endopeptidase CwlK (cwlK), found in Bacillus subtilis (strain 168).